A 259-amino-acid chain; its full sequence is BTB/POZ domain-containing protein KCTD4 (259 aa).

The segment at M1–D25 is disordered. The BTB domain occupies T33 to Q134.

This chain is BTB/POZ domain-containing protein KCTD4 (KCTD4), found in Homo sapiens (Human).